A 146-amino-acid chain; its full sequence is MEINRDEFKEVVVNIGRVTKVVKGGRRFRFNALVVVGNKNGLVGFGLGKAKEVPDAIKKAVDDAFKNIIKVNVKGTTIAHDIEHKYNASKILLKPASEGTGVIAGGSARPVIELAGIKDILTKSLGSNNPYNVVRATIDALSRIKA.

In terms of domain architecture, S5 DRBM spans 8 to 71 (FKEVVVNIGR…DDAFKNIIKV (64 aa)).

It belongs to the universal ribosomal protein uS5 family. Part of the 30S ribosomal subunit. Contacts proteins S4 and S8.

In terms of biological role, with S4 and S12 plays an important role in translational accuracy. Located at the back of the 30S subunit body where it stabilizes the conformation of the head with respect to the body. The protein is Small ribosomal subunit protein uS5 of Wolinella succinogenes (strain ATCC 29543 / DSM 1740 / CCUG 13145 / JCM 31913 / LMG 7466 / NCTC 11488 / FDC 602W) (Vibrio succinogenes).